Reading from the N-terminus, the 630-residue chain is Internalin B (630 aa).

The first 30 residues, 1 to 30 (MKEKHNPRRKYCLISGLAIIFSLWIIIGNG), serve as a signal peptide directing secretion. One can recognise an LRRNT domain in the interval 31 to 76 (AKVQAETITVSTPIKQIFPDDAFAETIKDNLKKKSVTDAVTQNELN). Ca(2+) contacts are provided by Pro-49, Asp-51, Glu-55, and Asp-59. LRR repeat units lie at residues 75-97 (LNSI…IQYL), 98-121 (PNVT…NLKN), 123-141 (GWLF…LKDL), 142-163 (KKLK…LVHL), 164-187 (PQLE…RLTK), 189-207 (DTLS…LAGL), and 208-231 (TKLQ…GLKN). An ig-like region region spans residues 241-319 (ECLNKPINHQ…RFHGRVTQPL (79 aa)). The LRRCT domain maps to 241–330 (ECLNKPINHQ…EVYTVSYDVD (90 aa)). Residues 320–392 (KEVYTVSYDV…TLYAVFKAET (73 aa)) form a b repeat region region. 3 GW domains span residues 393–467 (TEKT…LDRY), 472–550 (YDKG…TFYK), and 553–630 (MEKP…RAQK). The segment at 399–630 (LTRYVKYIRG…TKAANLRAQK (232 aa)) is GW repeat region, necessary and sufficient for cell surface attachment, interacts with host C1QBP and with heparin.

It belongs to the internalin family. In terms of assembly, monomer. Interacts via its LRR repeats with the extracellular portion of mammalian host MET; MET can bind HGF, its endogenous ligand, and InlB simultaneously. Probably forms a dimer upon interaction with host MET, which subsequently allows dimerization of the host MET and subsequent host signaling; dimerization probably occurs via the convex surface of InlB. Interacts with host complement component 1 Q subcomponent-binding protein (C1QBP). Interacts in vitro with human intestinal mucin-2 (MUC2) but not with mucin-1. Ca(2+) serves as cofactor.

The protein resides in the secreted. It localises to the cell surface. The protein localises to the cell membrane. Functionally, mediates the entry of L.monocytogenes into normally non-phagocytic mammalian host cells. Its host receptor is hepatocyte growth factor receptor (HGF receptor, a tyrosine kinase, MET) which is tyrosine-phosphorylated in response to InlB in human, green monkey, mouse and dog cell lines. Downstream adapter proteins GAB1 and CBL are phosphorylated in response to InlB, which also causes cell colony scattering. InlB binding to mammalian cells is saturable and inhibited by EDTA; InlB-coated beads can be taken up by host cells. Complement component 1 Q subcomponent-binding protein (gC1q-R, C1QBP) might act as an InlB receptor, leading to activation of PI3-kinase in green monkey cells. Stimulation of Tyr-phosphorylation by InlB is antagonized by C1QBP, showing that potentiation of MET signaling via the GW domains is not mediated by C1QBP; the exact role of C1QBP remains to be determined. Stimulation of Tyr-phosphorylation of MET by InlB is potentiated by the InlB GW domains and glycosaminoglycans such as heparin; exogenously added InlB, or hepatocyte growth factor (HGF) will also substitute for bacterial InlB, suggesting InlB promotes bacterial invasion by mimicking the hormone HGF. May stimulate phosphatidylinositol 4,5-bisphosphate 3-kinase (PI3-kinase) in green monkey cells, has less effect in humans as PI3-kinase is constitutively and highly expressed in Caco cells. Binds heparin; C1QBP and heparin seem to bind to the GW domains. This Listeria monocytogenes serotype 1/2a (strain EGD / Mackaness) protein is Internalin B (inlB).